We begin with the raw amino-acid sequence, 733 residues long: Non-secreted LysM effector LCP1 (733 aa).

Residues 1 to 22 form the signal peptide; the sequence is MMRRPWLLSALVAWVKLPSVQG. LysM domains are found at residues 211–256 and 261–309; these read SEYT…KLCI and DVYV…TICI. N-linked (GlcNAc...) asparagine glycosylation is found at Asn298, Asn304, Asn340, Asn350, Asn381, Asn432, Asn442, Asn455, and Asn538. One can recognise a LysM 3 domain in the interval 347-393; that stretch reads LFHNVTAGDDCGTIGLKYSISLDDFIFLNSMIWPNCTNLWLRASYCV. A compositionally biased stretch (low complexity) spans 605-629; the sequence is SPITSSAPTSTTASSKTSSSAAQPT. The segment at 605-637 is disordered; sequence SPITSSAPTSTTASSKTSSSAAQPTNVSTDGTC. Asn630 carries N-linked (GlcNAc...) asparagine glycosylation. Chitin-binding type-1 domains are found at residues 634–680 and 688–733; these read DGTC…KCDA and DGTC…GVCT. Cystine bridges form between Cys637/Cys654, Cys645/Cys660, Cys653/Cys667, Cys671/Cys678, Cys691/Cys708, Cys699/Cys714, Cys707/Cys721, and Cys725/Cys732.

The protein belongs to the secreted LysM effector family.

It localises to the secreted. It is found in the cell membrane. The protein resides in the vacuole. In terms of biological role, secreted effector that enables the plant pathogenic fungus to manipulate host defenses for successful infection. Not involved in host recognition and penetration but suppresses host cell death and promotes fumonisin biosynthesis while the pathogen colonizes maize kernels. This chain is Non-secreted LysM effector LCP1, found in Gibberella moniliformis (strain M3125 / FGSC 7600) (Maize ear and stalk rot fungus).